The following is a 150-amino-acid chain: Keratin-associated protein 15-1 (150 aa).

This sequence belongs to the PMG family. In terms of assembly, interacts with hair keratins. In terms of tissue distribution, expressed at high levels in skin and at lower levels in the developing mammary gland.

In the hair cortex, hair keratin intermediate filaments are embedded in an interfilamentous matrix, consisting of hair keratin-associated proteins (KRTAP), which are essential for the formation of a rigid and resistant hair shaft through their extensive disulfide bond cross-linking with abundant cysteine residues of hair keratins. The matrix proteins include the high-sulfur and high-glycine-tyrosine keratins. This chain is Keratin-associated protein 15-1, found in Mus musculus (Mouse).